A 79-amino-acid polypeptide reads, in one-letter code: Small ribosomal subunit protein bS16c (79 aa).

Belongs to the bacterial ribosomal protein bS16 family.

It localises to the plastid. The protein resides in the chloroplast. The sequence is that of Small ribosomal subunit protein bS16c from Trieres chinensis (Marine centric diatom).